Consider the following 721-residue polypeptide: 1,4-alpha-glucan branching enzyme GlgB (721 aa).

The active-site Nucleophile is the Asp-400. The active-site Proton donor is Glu-453.

It belongs to the glycosyl hydrolase 13 family. GlgB subfamily. In terms of assembly, monomer.

It carries out the reaction Transfers a segment of a (1-&gt;4)-alpha-D-glucan chain to a primary hydroxy group in a similar glucan chain.. It functions in the pathway glycan biosynthesis; glycogen biosynthesis. Its function is as follows. Catalyzes the formation of the alpha-1,6-glucosidic linkages in glycogen by scission of a 1,4-alpha-linked oligosaccharide from growing alpha-1,4-glucan chains and the subsequent attachment of the oligosaccharide to the alpha-1,6 position. This Chlamydia abortus (strain DSM 27085 / S26/3) (Chlamydophila abortus) protein is 1,4-alpha-glucan branching enzyme GlgB.